The following is a 447-amino-acid chain: Adenylosuccinate synthetase (447 aa).

GTP contacts are provided by residues 35–41 (GDEGKGK) and 63–65 (GHT). D36 (proton acceptor) is an active-site residue. Mg(2+)-binding residues include D36 and G63. Residues 36–39 (DEGK), 61–64 (NAGH), T153, R167, N245, T260, and R324 each bind IMP. H64 serves as the catalytic Proton donor. Substrate is bound at residue 320-326 (VTTKRKR). GTP contacts are provided by residues R326, 352-354 (KLD), and 435-437 (GVG).

This sequence belongs to the adenylosuccinate synthetase family. In terms of assembly, homodimer. Requires Mg(2+) as cofactor.

The protein localises to the cytoplasm. It carries out the reaction IMP + L-aspartate + GTP = N(6)-(1,2-dicarboxyethyl)-AMP + GDP + phosphate + 2 H(+). It participates in purine metabolism; AMP biosynthesis via de novo pathway; AMP from IMP: step 1/2. Functionally, plays an important role in the de novo pathway and in the salvage pathway of purine nucleotide biosynthesis. Catalyzes the first committed step in the biosynthesis of AMP from IMP. The sequence is that of Adenylosuccinate synthetase from Drosophila erecta (Fruit fly).